A 138-amino-acid chain; its full sequence is Basic phospholipase A2 homolog TM-N49 (138 aa).

The N-terminal stretch at 1-16 is a signal peptide; that stretch reads MRTLWIMAVLLLGVEG. Disulfide bonds link Cys42–Cys131, Cys44–Cys60, Cys59–Cys111, Cys65–Cys138, Cys66–Cys104, Cys73–Cys97, and Cys91–Cys102.

This sequence belongs to the phospholipase A2 family. Group II subfamily. N49 sub-subfamily. Homodimer; non-covalently linked. In terms of tissue distribution, expressed by the venom gland.

Its subcellular location is the secreted. In terms of biological role, snake venom phospholipase A2 (PLA2) that exhibits potent myotoxic activity causing inflammatory cell infiltration, severe myoedema, myonecrosis and myolysis in the gastrocnemius muscles of BALB/c mice. The polypeptide is Basic phospholipase A2 homolog TM-N49 (Protobothrops mucrosquamatus (Taiwan habu)).